The following is a 252-amino-acid chain: Ubiquinone biosynthesis O-methyltransferase (252 aa).

S-adenosyl-L-methionine-binding residues include R45, G76, D97, and M141.

Belongs to the methyltransferase superfamily. UbiG/COQ3 family.

The catalysed reaction is a 3-demethylubiquinol + S-adenosyl-L-methionine = a ubiquinol + S-adenosyl-L-homocysteine + H(+). It catalyses the reaction a 3-(all-trans-polyprenyl)benzene-1,2-diol + S-adenosyl-L-methionine = a 2-methoxy-6-(all-trans-polyprenyl)phenol + S-adenosyl-L-homocysteine + H(+). It participates in cofactor biosynthesis; ubiquinone biosynthesis. In terms of biological role, O-methyltransferase that catalyzes the 2 O-methylation steps in the ubiquinone biosynthetic pathway. The chain is Ubiquinone biosynthesis O-methyltransferase from Caulobacter vibrioides (strain ATCC 19089 / CIP 103742 / CB 15) (Caulobacter crescentus).